Consider the following 77-residue polypeptide: U8-lycotoxin-Ls1h (77 aa).

An N-terminal signal peptide occupies residues 1 to 20; that stretch reads MKLIIFTGLVLFAIVSLIEV. Positions 21-26 are excised as a propeptide; that stretch reads QADNER.

Belongs to the neurotoxin 19 (CSTX) family. 08 (U8-Lctx) subfamily. Post-translationally, contains 4 disulfide bonds. In terms of tissue distribution, expressed by the venom gland.

Its subcellular location is the secreted. This Lycosa singoriensis (Wolf spider) protein is U8-lycotoxin-Ls1h.